The chain runs to 123 residues: Small ribosomal subunit protein uS17 (123 aa).

It belongs to the universal ribosomal protein uS17 family. In terms of assembly, part of the 30S ribosomal subunit.

In terms of biological role, one of the primary rRNA binding proteins, it binds specifically to the 5'-end of 16S ribosomal RNA. The protein is Small ribosomal subunit protein uS17 of Pyrobaculum aerophilum (strain ATCC 51768 / DSM 7523 / JCM 9630 / CIP 104966 / NBRC 100827 / IM2).